The primary structure comprises 114 residues: MNTYAIIEAGGEQLQVQPGRFYDIRLNVPVTEFWENRKIVFSRVLMIRSESNTFLGKPWLEHATVNGRIFHPRRGNKLIIYKMRPKKHTSKKNGHRQTFMRLIIDSIFFNNQNL.

Belongs to the bacterial ribosomal protein bL21 family. Part of the 50S ribosomal subunit.

It localises to the plastid. The protein resides in the chloroplast. Its function is as follows. This protein binds to 23S rRNA. The sequence is that of Large ribosomal subunit protein bL21c from Staurastrum punctulatum (Green alga).